A 414-amino-acid polypeptide reads, in one-letter code: Hydroxysqualene dehydroxylase (414 aa).

This sequence belongs to the HpnE family.

The enzyme catalyses squalene + FAD + H2O + H(+) = hydroxysqualene + FADH2. It functions in the pathway secondary metabolite biosynthesis; hopanoid biosynthesis. Its function is as follows. Involved in the biosynthesis of the hopanoid precursor squalene (SQ) from farnesyl diphosphate (FPP). Catalyzes the third (last) step, the reduction of hydroxysqualene (HSQ) to SQ. In Zymomonas mobilis subsp. mobilis (strain ATCC 31821 / ZM4 / CP4), this protein is Hydroxysqualene dehydroxylase.